A 570-amino-acid polypeptide reads, in one-letter code: Sulfite reductase [NADPH] hemoprotein beta-component 1 (570 aa).

[4Fe-4S] cluster-binding residues include cysteine 434, cysteine 440, cysteine 479, and cysteine 483. Cysteine 483 serves as a coordination point for siroheme.

Belongs to the nitrite and sulfite reductase 4Fe-4S domain family. Alpha(8)-beta(8). The alpha component is a flavoprotein, the beta component is a hemoprotein. It depends on siroheme as a cofactor. The cofactor is [4Fe-4S] cluster.

It carries out the reaction hydrogen sulfide + 3 NADP(+) + 3 H2O = sulfite + 3 NADPH + 4 H(+). It participates in sulfur metabolism; hydrogen sulfide biosynthesis; hydrogen sulfide from sulfite (NADPH route): step 1/1. Component of the sulfite reductase complex that catalyzes the 6-electron reduction of sulfite to sulfide. This is one of several activities required for the biosynthesis of L-cysteine from sulfate. The protein is Sulfite reductase [NADPH] hemoprotein beta-component 1 of Klebsiella pneumoniae (strain 342).